Here is a 441-residue protein sequence, read N- to C-terminus: Ribosomal protein uS12 methylthiotransferase RimO (441 aa).

One can recognise an MTTase N-terminal domain in the interval 8–118 (PKIGFVSLGC…VLEHVHHYVP (111 aa)). The [4Fe-4S] cluster site is built by Cys17, Cys53, Cys82, Cys150, Cys154, and Cys157. Residues 136 to 373 (LTPRHYAYLK…MQLQQQISAE (238 aa)) form the Radical SAM core domain. The 66-residue stretch at 376–441 (QEKVGREILV…DEYDLWGSRV (66 aa)) folds into the TRAM domain.

It belongs to the methylthiotransferase family. RimO subfamily. [4Fe-4S] cluster is required as a cofactor.

The protein resides in the cytoplasm. The enzyme catalyses L-aspartate(89)-[ribosomal protein uS12]-hydrogen + (sulfur carrier)-SH + AH2 + 2 S-adenosyl-L-methionine = 3-methylsulfanyl-L-aspartate(89)-[ribosomal protein uS12]-hydrogen + (sulfur carrier)-H + 5'-deoxyadenosine + L-methionine + A + S-adenosyl-L-homocysteine + 2 H(+). Catalyzes the methylthiolation of an aspartic acid residue of ribosomal protein uS12. In Shigella boydii serotype 18 (strain CDC 3083-94 / BS512), this protein is Ribosomal protein uS12 methylthiotransferase RimO.